Consider the following 388-residue polypeptide: Phosphopentomutase (388 aa).

Mn(2+) contacts are provided by D9, D283, H288, D324, H325, and H336.

This sequence belongs to the phosphopentomutase family. Mn(2+) is required as a cofactor.

The protein resides in the cytoplasm. It carries out the reaction 2-deoxy-alpha-D-ribose 1-phosphate = 2-deoxy-D-ribose 5-phosphate. The enzyme catalyses alpha-D-ribose 1-phosphate = D-ribose 5-phosphate. Its pathway is carbohydrate degradation; 2-deoxy-D-ribose 1-phosphate degradation; D-glyceraldehyde 3-phosphate and acetaldehyde from 2-deoxy-alpha-D-ribose 1-phosphate: step 1/2. Functionally, isomerase that catalyzes the conversion of deoxy-ribose 1-phosphate (dRib-1-P) and ribose 1-phosphate (Rib-1-P) to deoxy-ribose 5-phosphate (dRib-5-P) and ribose 5-phosphate (Rib-5-P), respectively. In Deinococcus radiodurans (strain ATCC 13939 / DSM 20539 / JCM 16871 / CCUG 27074 / LMG 4051 / NBRC 15346 / NCIMB 9279 / VKM B-1422 / R1), this protein is Phosphopentomutase.